A 196-amino-acid chain; its full sequence is Ribosome maturation factor RimP (196 aa).

The protein belongs to the RimP family.

It localises to the cytoplasm. In terms of biological role, required for maturation of 30S ribosomal subunits. The sequence is that of Ribosome maturation factor RimP from Dinoroseobacter shibae (strain DSM 16493 / NCIMB 14021 / DFL 12).